The sequence spans 482 residues: tRNA sulfurtransferase (482 aa).

Residues 61–165 enclose the THUMP domain; that stretch reads QQVLEILTTT…DDKLNQILAH (105 aa). ATP is bound by residues 183 to 184, Lys-265, Gly-287, and Gln-296; that span reads LI. Cys-344 and Cys-456 are oxidised to a cystine. Positions 404-482 constitute a Rhodanese domain; the sequence is IEEHAVVLDI…GFNNVKVYRP (79 aa). The active-site Cysteine persulfide intermediate is Cys-456.

Belongs to the ThiI family.

The protein localises to the cytoplasm. The enzyme catalyses [ThiI sulfur-carrier protein]-S-sulfanyl-L-cysteine + a uridine in tRNA + 2 reduced [2Fe-2S]-[ferredoxin] + ATP + H(+) = [ThiI sulfur-carrier protein]-L-cysteine + a 4-thiouridine in tRNA + 2 oxidized [2Fe-2S]-[ferredoxin] + AMP + diphosphate. It carries out the reaction [ThiS sulfur-carrier protein]-C-terminal Gly-Gly-AMP + S-sulfanyl-L-cysteinyl-[cysteine desulfurase] + AH2 = [ThiS sulfur-carrier protein]-C-terminal-Gly-aminoethanethioate + L-cysteinyl-[cysteine desulfurase] + A + AMP + 2 H(+). Its pathway is cofactor biosynthesis; thiamine diphosphate biosynthesis. In terms of biological role, catalyzes the ATP-dependent transfer of a sulfur to tRNA to produce 4-thiouridine in position 8 of tRNAs, which functions as a near-UV photosensor. Also catalyzes the transfer of sulfur to the sulfur carrier protein ThiS, forming ThiS-thiocarboxylate. This is a step in the synthesis of thiazole, in the thiamine biosynthesis pathway. The sulfur is donated as persulfide by IscS. The protein is tRNA sulfurtransferase of Vibrio vulnificus (strain YJ016).